The following is a 61-amino-acid chain: Small ribosomal subunit protein uS14 (61 aa).

4 residues coordinate Zn(2+): cysteine 24, cysteine 27, cysteine 40, and cysteine 43.

It belongs to the universal ribosomal protein uS14 family. Zinc-binding uS14 subfamily. Part of the 30S ribosomal subunit. Contacts proteins S3 and S10. It depends on Zn(2+) as a cofactor.

Its function is as follows. Binds 16S rRNA, required for the assembly of 30S particles and may also be responsible for determining the conformation of the 16S rRNA at the A site. The chain is Small ribosomal subunit protein uS14 from Geobacter sp. (strain M21).